The chain runs to 250 residues: 5-oxoprolinase subunit A (250 aa).

This sequence belongs to the LamB/PxpA family. In terms of assembly, forms a complex composed of PxpA, PxpB and PxpC.

It carries out the reaction 5-oxo-L-proline + ATP + 2 H2O = L-glutamate + ADP + phosphate + H(+). Functionally, catalyzes the cleavage of 5-oxoproline to form L-glutamate coupled to the hydrolysis of ATP to ADP and inorganic phosphate. This chain is 5-oxoprolinase subunit A, found in Klebsiella pneumoniae (strain 342).